Reading from the N-terminus, the 33-residue chain is Protamine TP16 (33 aa).

The interval 1-33 (MPRRRRSSSRPVRRRRRARVSRRRRRRGRRRRR) is disordered.

In terms of tissue distribution, testis.

It is found in the nucleus. It localises to the chromosome. Protamines substitute for histones in the chromatin of sperm during the haploid phase of spermatogenesis. They compact sperm DNA into a highly condensed, stable and inactive complex. This Oncorhynchus mykiss (Rainbow trout) protein is Protamine TP16.